A 367-amino-acid chain; its full sequence is MQDEYYMARALKLAQRGRFTTHPNPNVGCVIVKDGEIVGEGYHQRAGEPHAEVHALRMAGEKAKGATAYVTLEPCSHHGRTPPCCDALIAAGVARVVASMQDPNPQVAGRGLYRLQQAGIDVSHGLMMSEAEQLNKGFLKRMRTGFPYIQLKLGASLDGRTAMASGESQWITSPQARRDVQLLRAQSHAILTSSATVLADDPALTVRWSELDEQTQALYPQQNLRQPIRIVIDSQNRVTPVHRIVQQPGETWFARTQEDSREWPETVRTLLIPEHKGHLDLVVLMMQLGKQQINSIWVEAGPTLAGALLQAGLVDELIVYIAPKLLGSDARGLCTLPGLEKLADAPQFKFKEIRHVGPDVCLHLVGA.

One can recognise a CMP/dCMP-type deaminase domain in the interval 1-123; the sequence is MQDEYYMARA…RLQQAGIDVS (123 aa). Positions 1 to 145 are deaminase; sequence MQDEYYMARA…KGFLKRMRTG (145 aa). Histidine 50 contributes to the Zn(2+) binding site. Glutamate 52 acts as the Proton donor in catalysis. Residues cysteine 75 and cysteine 84 each contribute to the Zn(2+) site. Residues 146–367 are reductase; the sequence is FPYIQLKLGA…PDVCLHLVGA (222 aa). 161-164 contacts NADP(+); that stretch reads TAMA. Position 168 (serine 168) interacts with substrate. Tryptophan 170 contacts NADP(+). Arginine 184 contacts substrate. The NADP(+) site is built by threonine 196 and aspartate 200. Substrate-binding residues include leucine 204 and arginine 207. Position 234 (serine 234) interacts with NADP(+). Glutamate 299 serves as a coordination point for substrate. 301–304 contributes to the NADP(+) binding site; sequence GPTL.

The protein in the N-terminal section; belongs to the cytidine and deoxycytidylate deaminase family. In the C-terminal section; belongs to the HTP reductase family. As to quaternary structure, homodimer. It depends on Zn(2+) as a cofactor.

The enzyme catalyses 2,5-diamino-6-hydroxy-4-(5-phosphoribosylamino)-pyrimidine + H2O + H(+) = 5-amino-6-(5-phospho-D-ribosylamino)uracil + NH4(+). It catalyses the reaction 5-amino-6-(5-phospho-D-ribitylamino)uracil + NADP(+) = 5-amino-6-(5-phospho-D-ribosylamino)uracil + NADPH + H(+). Its pathway is cofactor biosynthesis; riboflavin biosynthesis; 5-amino-6-(D-ribitylamino)uracil from GTP: step 2/4. It functions in the pathway cofactor biosynthesis; riboflavin biosynthesis; 5-amino-6-(D-ribitylamino)uracil from GTP: step 3/4. Functionally, converts 2,5-diamino-6-(ribosylamino)-4(3h)-pyrimidinone 5'-phosphate into 5-amino-6-(ribosylamino)-2,4(1h,3h)-pyrimidinedione 5'-phosphate. The protein is Riboflavin biosynthesis protein RibD (ribD) of Escherichia coli (strain K12).